The chain runs to 647 residues: Threonine--tRNA ligase (647 aa).

The 61-residue stretch at 1 to 61 (MIKITFPDGA…EEDGSIEIVT (61 aa)) folds into the TGS domain. The segment at 240 to 538 (DHRKLGKELD…LIETYKGAFP (299 aa)) is catalytic. Zn(2+) is bound by residues C334, H385, and H515.

This sequence belongs to the class-II aminoacyl-tRNA synthetase family. In terms of assembly, homodimer. Requires Zn(2+) as cofactor.

The protein resides in the cytoplasm. It catalyses the reaction tRNA(Thr) + L-threonine + ATP = L-threonyl-tRNA(Thr) + AMP + diphosphate + H(+). Its function is as follows. Catalyzes the attachment of threonine to tRNA(Thr) in a two-step reaction: L-threonine is first activated by ATP to form Thr-AMP and then transferred to the acceptor end of tRNA(Thr). Also edits incorrectly charged L-seryl-tRNA(Thr). The protein is Threonine--tRNA ligase of Streptococcus pyogenes serotype M3 (strain ATCC BAA-595 / MGAS315).